The following is a 254-amino-acid chain: Phosphorelay intermediate protein rdeA (254 aa).

An HPt domain is found at glutamate 26–tryptophan 123. Histidine 65 is modified (phosphohistidine). The interval aspartate 124–lysine 254 is disordered. A compositionally biased stretch (acidic residues) spans glycine 131–proline 143. The segment covering asparagine 146 to serine 160 has biased composition (low complexity). Residues lysine 166 to lysine 186 are compositionally biased toward basic and acidic residues. Over residues asparagine 220–serine 238 the composition is skewed to low complexity. Positions lysine 239–lysine 254 are enriched in polar residues.

In terms of processing, the phosphorelay mechanism involves the sequential transfer of a phosphate group from 'Asp-212' of pde2 to His-65 of rdeA. In vitro, dephosphorylated by dokA.

The protein localises to the cytoplasm. Phosphorelay protein that supplies phosphate to regA or accepts phosphate from regA; depending on the relative concentration of the phosphodonor proteins. In vitro, acts as a substrate for cheA (bacterial kinase). Plays a role in the development. ypd1 (yeast) can complement rdeA defect. The chain is Phosphorelay intermediate protein rdeA (rdeA) from Dictyostelium discoideum (Social amoeba).